The chain runs to 455 residues: Membrane-bound lytic murein transglycosylase F (455 aa).

The N-terminal stretch at 1–21 (MPKSAVSLFAILLLAASVITA) is a signal peptide. Residues 22 to 264 (CSPQTRPDAM…HIKEQHFGHV (243 aa)) are non-LT domain. Residues 265-455 (KQFNYVTTSL…LKYLDEQGRL (191 aa)) form an LT domain region. Glutamate 309 is an active-site residue.

In the N-terminal section; belongs to the bacterial solute-binding protein 3 family. It in the C-terminal section; belongs to the transglycosylase Slt family.

The protein localises to the cell outer membrane. It carries out the reaction Exolytic cleavage of the (1-&gt;4)-beta-glycosidic linkage between N-acetylmuramic acid (MurNAc) and N-acetylglucosamine (GlcNAc) residues in peptidoglycan, from either the reducing or the non-reducing ends of the peptidoglycan chains, with concomitant formation of a 1,6-anhydrobond in the MurNAc residue.. Murein-degrading enzyme that degrades murein glycan strands and insoluble, high-molecular weight murein sacculi, with the concomitant formation of a 1,6-anhydromuramoyl product. Lytic transglycosylases (LTs) play an integral role in the metabolism of the peptidoglycan (PG) sacculus. Their lytic action creates space within the PG sacculus to allow for its expansion as well as for the insertion of various structures such as secretion systems and flagella. This chain is Membrane-bound lytic murein transglycosylase F, found in Idiomarina loihiensis (strain ATCC BAA-735 / DSM 15497 / L2-TR).